We begin with the raw amino-acid sequence, 163 residues long: Lipoprotein signal peptidase (163 aa).

3 consecutive transmembrane segments (helical) span residues 11-31 (ILIAVFVVIFDQVTKYIIATT), 64-84 (MTFFFIITIIILIALVYFFIN), and 88-108 (YNLFMQVAISLLFAGALGNFI). Residues Asp118 and Asp136 contribute to the active site. A helical transmembrane segment spans residues 131 to 151 (IFNIADSSLTIGVILIIIALL).

Belongs to the peptidase A8 family.

It is found in the cell membrane. It carries out the reaction Release of signal peptides from bacterial membrane prolipoproteins. Hydrolyzes -Xaa-Yaa-Zaa-|-(S,diacylglyceryl)Cys-, in which Xaa is hydrophobic (preferably Leu), and Yaa (Ala or Ser) and Zaa (Gly or Ala) have small, neutral side chains.. Its pathway is protein modification; lipoprotein biosynthesis (signal peptide cleavage). Functionally, this protein specifically catalyzes the removal of signal peptides from prolipoproteins. The sequence is that of Lipoprotein signal peptidase from Staphylococcus aureus (strain bovine RF122 / ET3-1).